A 248-amino-acid chain; its full sequence is Pyruvate formate-lyase-activating enzyme (248 aa).

In terms of domain architecture, Radical SAM core spans 17–248; sequence VDGPGIRFIV…NKILETSSYK (232 aa). Residues C31, C35, and C38 each coordinate [4Fe-4S] cluster. S-adenosyl-L-methionine-binding positions include 37-39, G80, 135-137, and H208; these read FCH and DIK.

This sequence belongs to the organic radical-activating enzymes family. [4Fe-4S] cluster serves as cofactor.

It is found in the cytoplasm. The catalysed reaction is glycyl-[formate C-acetyltransferase] + reduced [flavodoxin] + S-adenosyl-L-methionine = glycin-2-yl radical-[formate C-acetyltransferase] + semiquinone [flavodoxin] + 5'-deoxyadenosine + L-methionine + H(+). Functionally, activation of pyruvate formate-lyase under anaerobic conditions by generation of an organic free radical, using S-adenosylmethionine and reduced flavodoxin as cosubstrates to produce 5'-deoxy-adenosine. The protein is Pyruvate formate-lyase-activating enzyme (pflA) of Listeria innocua serovar 6a (strain ATCC BAA-680 / CLIP 11262).